The sequence spans 154 residues: Anaerobic ribonucleoside-triphosphate reductase-activating protein (154 aa).

[4Fe-4S] cluster-binding residues include Cys-26, Cys-30, and Cys-33. S-adenosyl-L-methionine is bound by residues 32–34 (GCY) and Gly-74.

Belongs to the organic radical-activating enzymes family. In terms of assembly, forms a tetramer composed of two NrdD and two NrdG subunits. The cofactor is [4Fe-4S] cluster.

Its subcellular location is the cytoplasm. It catalyses the reaction glycyl-[protein] + reduced [flavodoxin] + S-adenosyl-L-methionine = glycin-2-yl radical-[protein] + semiquinone [flavodoxin] + 5'-deoxyadenosine + L-methionine + H(+). Its function is as follows. Activation of anaerobic ribonucleoside-triphosphate reductase under anaerobic conditions by generation of an organic free radical, using S-adenosylmethionine and reduced flavodoxin as cosubstrates to produce 5'-deoxy-adenosine. The protein is Anaerobic ribonucleoside-triphosphate reductase-activating protein (nrdG) of Salmonella typhi.